Here is a 212-residue protein sequence, read N- to C-terminus: Uracil phosphoribosyltransferase (212 aa).

5-phospho-alpha-D-ribose 1-diphosphate is bound by residues Arg-78, Arg-103, and 130 to 138; that span reads DPMLATGSS. Residues Ile-193 and 198-200 each bind uracil; that span reads GDA. Residue Asp-199 coordinates 5-phospho-alpha-D-ribose 1-diphosphate.

This sequence belongs to the UPRTase family. The cofactor is Mg(2+).

It catalyses the reaction UMP + diphosphate = 5-phospho-alpha-D-ribose 1-diphosphate + uracil. It functions in the pathway pyrimidine metabolism; UMP biosynthesis via salvage pathway; UMP from uracil: step 1/1. Allosterically activated by GTP. Its function is as follows. Catalyzes the conversion of uracil and 5-phospho-alpha-D-ribose 1-diphosphate (PRPP) to UMP and diphosphate. The sequence is that of Uracil phosphoribosyltransferase from Pseudomonas fluorescens (strain ATCC BAA-477 / NRRL B-23932 / Pf-5).